A 339-amino-acid chain; its full sequence is GTPase Obg (339 aa).

The Obg domain occupies 1-159 (MKFVDEAFVR…RELKLELKLL (159 aa)). Positions 160–333 (ADVGLLGLPN…LCYDLMSFLE (174 aa)) constitute an OBG-type G domain. Residues 166–173 (GLPNAGKS), 191–195 (FTTLY), 213–216 (DIPG), 283–286 (NKID), and 314–316 (SAI) each bind GTP. Mg(2+) is bound by residues S173 and T193.

The protein belongs to the TRAFAC class OBG-HflX-like GTPase superfamily. OBG GTPase family. Monomer. Requires Mg(2+) as cofactor.

It localises to the cytoplasm. Functionally, an essential GTPase which binds GTP, GDP and possibly (p)ppGpp with moderate affinity, with high nucleotide exchange rates and a fairly low GTP hydrolysis rate. Plays a role in control of the cell cycle, stress response, ribosome biogenesis and in those bacteria that undergo differentiation, in morphogenesis control. This chain is GTPase Obg, found in Coxiella burnetii (strain RSA 331 / Henzerling II).